The primary structure comprises 20 residues: Thylakoid lumenal 18.4 kDa protein (20 aa).

It is found in the plastid. Its subcellular location is the chloroplast thylakoid lumen. The polypeptide is Thylakoid lumenal 18.4 kDa protein (Spinacia oleracea (Spinach)).